The chain runs to 313 residues: Ketimine reductase mu-crystallin (313 aa).

Arginine 47 serves as a coordination point for 3,3',5-triiodo-L-thyronine. NADPH contacts are provided by serine 90, histidine 91, arginine 118, alanine 143, valine 145, glutamine 146, asparagine 167, arginine 168, threonine 169, asparagine 172, threonine 204, methionine 205, and valine 225. Residue glutamate 256 participates in 3,3',5-triiodo-L-thyronine binding. Serine 291 serves as a coordination point for NADPH.

Belongs to the ornithine cyclodeaminase/mu-crystallin family. As to quaternary structure, homodimer. Binds the thyroid hormone triiodothyronine (T3); T3 binding inhibits enzymatic activity.

The protein localises to the cytoplasm. The enzyme catalyses L-pipecolate + NADP(+) = Delta(1)-piperideine-2-carboxylate + NADPH + H(+). It carries out the reaction L-pipecolate + NAD(+) = Delta(1)-piperideine-2-carboxylate + NADH + H(+). It catalyses the reaction L-proline + NADP(+) = 1-pyrroline-2-carboxylate + NADPH + H(+). The catalysed reaction is L-proline + NAD(+) = 1-pyrroline-2-carboxylate + NADH + H(+). The enzyme catalyses (3R)-1,4-thiomorpholine-3-carboxylate + NAD(+) = 3,4-dehydrothiomorpholine-3-carboxylate + NADH + 2 H(+). It carries out the reaction (3R)-1,4-thiomorpholine-3-carboxylate + NADP(+) = 3,4-dehydrothiomorpholine-3-carboxylate + NADPH + 2 H(+). It catalyses the reaction (S)-cystathionine ketimine + NADH + 2 H(+) = (3R,5S)-2,3,5,6,7-pentahydro-1,4-thiazepine-3,5-dicarboxylate + NAD(+). The catalysed reaction is (S)-cystathionine ketimine + NADPH + 2 H(+) = (3R,5S)-2,3,5,6,7-pentahydro-1,4-thiazepine-3,5-dicarboxylate + NADP(+). The enzyme catalyses (R)-lanthionine ketimine + NADPH + 2 H(+) = (3R,5R)-1,4-thiomorpholine-3,5-dicarboxylate + NADP(+). It carries out the reaction Delta(2)-thiazoline-2-carboxylate + NADPH + 2 H(+) = L-thiazolidine-2-carboxylate + NADP(+). Catalyzes the NAD(P)H-dependent reduction of imine double bonds of a number of cyclic ketimine substrates, including sulfur-containing cyclic ketimines. Under physiological conditions, it efficiently catalyzes delta(1)-piperideine-2-carboxylate (P2C) and delta(1)-pyrroline-2-carboxylate (Pyr2C) reduction, suggesting a central role in lysine and glutamate metabolism. Additional substrates are delta(2)-thiazoline-2-carboxylate (T2C), 3,4-dehydrothiomorpholine-3-carboxylate (AECK), and (R)-lanthionine ketimine (LK) that is reduced at very low rate compared to other substrates. Also catalyzes the NAD(P)H-dependent reduction of (S)-cystathionine ketimine (CysK). The protein is Ketimine reductase mu-crystallin of Rattus norvegicus (Rat).